Consider the following 193-residue polypeptide: Large ribosomal subunit protein uL18 (193 aa).

The protein belongs to the universal ribosomal protein uL18 family. In terms of assembly, part of the 50S ribosomal subunit. Contacts the 5S and 23S rRNAs.

This is one of the proteins that bind and probably mediate the attachment of the 5S RNA into the large ribosomal subunit, where it forms part of the central protuberance. The chain is Large ribosomal subunit protein uL18 from Methanococcus vannielii (strain ATCC 35089 / DSM 1224 / JCM 13029 / OCM 148 / SB).